A 251-amino-acid chain; its full sequence is Lactose phosphotransferase system repressor (251 aa).

Residues 3-58 (KHERLDEIAKLVNKKGTIRTNEIVEGLNVSDMTVRRDLIELENKGILTKIHGGARS) enclose the HTH deoR-type domain. The H-T-H motif DNA-binding region spans 20 to 39 (IRTNEIVEGLNVSDMTVRRD).

In terms of biological role, repressor of the lactose catabolism operon. Galactose-6-phosphate is the inducer. This chain is Lactose phosphotransferase system repressor (lacR), found in Staphylococcus aureus (strain NCTC 8325 / PS 47).